The sequence spans 312 residues: Malate dehydrogenase (312 aa).

NAD(+) is bound by residues 7 to 13 (GAAGGIG) and aspartate 34. Substrate contacts are provided by arginine 81 and arginine 87. NAD(+) contacts are provided by residues asparagine 94 and 117-119 (ITN). Positions 119 and 153 each coordinate substrate. The active-site Proton acceptor is histidine 177. Methionine 227 provides a ligand contact to NAD(+).

It belongs to the LDH/MDH superfamily. MDH type 1 family. Homodimer.

It carries out the reaction (S)-malate + NAD(+) = oxaloacetate + NADH + H(+). In terms of biological role, catalyzes the reversible oxidation of malate to oxaloacetate. The polypeptide is Malate dehydrogenase (Escherichia coli O6:K15:H31 (strain 536 / UPEC)).